We begin with the raw amino-acid sequence, 90 residues long: U7-theraphotoxin-Hhn1g (90 aa).

An N-terminal signal peptide occupies residues 1–19 (MKTAIFTVVLALAVFAVLS). A propeptide spanning residues 20–50 (FGWEANEKALSEEFTELIHEKEAASETEARE) is cleaved from the precursor. 3 disulfides stabilise this stretch: Cys-51–Cys-65, Cys-58–Cys-70, and Cys-64–Cys-81.

Belongs to the neurotoxin 10 (Hwtx-1) family. 13 (Hntx-13) subfamily. Expressed by the venom gland.

Its subcellular location is the secreted. Functionally, ion channel inhibitor. This is U7-theraphotoxin-Hhn1g from Cyriopagopus hainanus (Chinese bird spider).